A 726-amino-acid polypeptide reads, in one-letter code: MGPTTATDTGARMKPTTVASAVHRVQMALYDGAAASREPLLRAAASLLSGPDYADVVTERSIADACGYPACPNPLPSEDARGKAAPRFRISLREHRVYDLEEARKFCSERCLVASAAFGASLPPDRPFGVSPDRLDALVALFEGGGGGGDDGGLALGFGASGDGKEVEEGRKVEIMEKEAAGTGEVTLQEWIGPSDAIEGYVPRRDRVVGGPKKEAKQNDACSAEQSSNINVDSRNASSGESGMVLTENTKAKKKEATKTPLKMFKQDEDNDMLSSCISDSIVKQLEDVVLEEKKDKKKNKAAKGTSRVGKSKPAKRPVGRDGHEVDFTSTIIMGDRGSEMMDHGALGQYNFSSSILANEQPSSSQYAAIDSVQAYTEELDELFSNAVNIAKDETSDDSGRCTLRSSLKAVGSKNAGHSVKWADENGSVLETSRAFVSHSSKSQESMDSSVRRESAEACAAALIEAAEAISSGTSEVEDAVSKAGIIILPDMVNQQQYNNDYDNDKDAGENEIFEIDRGVVKWPKKTVLLDTDMFDVDDSWHDTPPEGFSLTLSSFATMWAALFGWVSRSSLAYVYGLDESSMEDLLIAGGRECPQKRVLNDGHSSEIRRALDTCVCNALPVLVSNLRMQIPVSKLEITLGYLLDTMSFVDALPSLRSRQWQLMVLVLLDALSLHRLPALAPIMSDSKLLQKLLNSAQVSREEYDSMIDLLLPFGRSTQSQASLPS.

The segment at 43 to 131 adopts an RTR1-type zinc-finger fold; it reads AAASLLSGPD…LPPDRPFGVS (89 aa). 4 residues coordinate Zn(2+): Cys66, Cys71, Cys107, and Cys111. Residues 209–218 show a composition bias toward basic and acidic residues; the sequence is VGGPKKEAKQ. 2 disordered regions span residues 209-242 and 294-323; these read VGGPKKEAKQNDACSAEQSSNINVDSRNASSGES and KKDKKKNKAAKGTSRVGKSKPAKRPVGRDG. A compositionally biased stretch (polar residues) spans 220–241; it reads DACSAEQSSNINVDSRNASSGE.

The protein belongs to the RPAP2 family.

It is found in the nucleus. It catalyses the reaction O-phospho-L-seryl-[protein] + H2O = L-seryl-[protein] + phosphate. It carries out the reaction O-phospho-L-threonyl-[protein] + H2O = L-threonyl-[protein] + phosphate. Putative RNA polymerase II subunit B1 C-terminal domain (CTD) phosphatase involved in RNA polymerase II transcription regulation. This is Putative RNA polymerase II subunit B1 CTD phosphatase RPAP2 homolog from Oryza sativa subsp. japonica (Rice).